Here is a 198-residue protein sequence, read N- to C-terminus: Elongation factor Ts (198 aa).

Residues 81 to 84 (TDFV) form an involved in Mg(2+) ion dislocation from EF-Tu region.

The protein belongs to the EF-Ts family.

The protein resides in the cytoplasm. Associates with the EF-Tu.GDP complex and induces the exchange of GDP to GTP. It remains bound to the aminoacyl-tRNA.EF-Tu.GTP complex up to the GTP hydrolysis stage on the ribosome. This Leptospira biflexa serovar Patoc (strain Patoc 1 / Ames) protein is Elongation factor Ts.